The primary structure comprises 397 residues: Riboflavin biosynthesis protein RibBA (397 aa).

A DHBP synthase region spans residues 1 to 199 (MFHRIEEALE…IEDLIAYRRH (199 aa)). Residues 26 to 27 (RE), Asp-31, 138 to 142 (RAGHT), and Glu-162 contribute to the D-ribulose 5-phosphate site. Glu-27 contacts Mg(2+). His-141 is a binding site for Mg(2+). The interval 200–397 (HETLVTREVE…VNKLGHLLNL (198 aa)) is GTP cyclohydrolase II. Residue 250-254 (RVHSE) coordinates GTP. Cys-255, Cys-266, and Cys-268 together coordinate Zn(2+). GTP is bound by residues Gln-271, 293-295 (EGR), and Thr-315. Catalysis depends on Asp-327, which acts as the Proton acceptor; for GTP cyclohydrolase activity. Residue Arg-329 is the Nucleophile; for GTP cyclohydrolase activity of the active site. Residues Thr-350 and Lys-355 each contribute to the GTP site.

This sequence in the N-terminal section; belongs to the DHBP synthase family. In the C-terminal section; belongs to the GTP cyclohydrolase II family. Requires Mg(2+) as cofactor. The cofactor is Mn(2+). Zn(2+) is required as a cofactor.

The enzyme catalyses D-ribulose 5-phosphate = (2S)-2-hydroxy-3-oxobutyl phosphate + formate + H(+). It catalyses the reaction GTP + 4 H2O = 2,5-diamino-6-hydroxy-4-(5-phosphoribosylamino)-pyrimidine + formate + 2 phosphate + 3 H(+). Its pathway is cofactor biosynthesis; riboflavin biosynthesis; 2-hydroxy-3-oxobutyl phosphate from D-ribulose 5-phosphate: step 1/1. It participates in cofactor biosynthesis; riboflavin biosynthesis; 5-amino-6-(D-ribitylamino)uracil from GTP: step 1/4. Functionally, catalyzes the conversion of D-ribulose 5-phosphate to formate and 3,4-dihydroxy-2-butanone 4-phosphate. Catalyzes the conversion of GTP to 2,5-diamino-6-ribosylamino-4(3H)-pyrimidinone 5'-phosphate (DARP), formate and pyrophosphate. This is Riboflavin biosynthesis protein RibBA from Bacillus cereus (strain G9842).